The chain runs to 809 residues: Probable replication endonuclease from prophage-like region (809 aa).

Residues Tyr503 and Tyr507 each act as O-(5'-phospho-DNA)-tyrosine intermediate in the active site.

Belongs to the phage GPA family.

In terms of biological role, possible endonuclease which induces a single-strand cut and initiates DNA replication. This is Probable replication endonuclease from prophage-like region from Salmonella typhimurium (strain LT2 / SGSC1412 / ATCC 700720).